The chain runs to 370 residues: Phosphoserine aminotransferase (370 aa).

Arg-38 contributes to the L-glutamate binding site. Residues Trp-101, Thr-143, Asp-166, and Gln-189 each coordinate pyridoxal 5'-phosphate. An N6-(pyridoxal phosphate)lysine modification is found at Lys-190. Position 243–244 (243–244 (NT)) interacts with pyridoxal 5'-phosphate.

Belongs to the class-V pyridoxal-phosphate-dependent aminotransferase family. SerC subfamily. In terms of assembly, homodimer. Pyridoxal 5'-phosphate is required as a cofactor.

It localises to the cytoplasm. It catalyses the reaction O-phospho-L-serine + 2-oxoglutarate = 3-phosphooxypyruvate + L-glutamate. It carries out the reaction 4-(phosphooxy)-L-threonine + 2-oxoglutarate = (R)-3-hydroxy-2-oxo-4-phosphooxybutanoate + L-glutamate. Its pathway is amino-acid biosynthesis; L-serine biosynthesis; L-serine from 3-phospho-D-glycerate: step 2/3. It participates in cofactor biosynthesis; pyridoxine 5'-phosphate biosynthesis; pyridoxine 5'-phosphate from D-erythrose 4-phosphate: step 3/5. Its function is as follows. Catalyzes the reversible conversion of 3-phosphohydroxypyruvate to phosphoserine and of 3-hydroxy-2-oxo-4-phosphonooxybutanoate to phosphohydroxythreonine. The chain is Phosphoserine aminotransferase from Methanosarcina mazei (strain ATCC BAA-159 / DSM 3647 / Goe1 / Go1 / JCM 11833 / OCM 88) (Methanosarcina frisia).